Reading from the N-terminus, the 306-residue chain is MANTVQHRLRDWLLSLYQHLLPQRTLSQLMYRLTRHRIVWLTGLQIRLFARIFGVNLKEAEFSSPKDYPHFNAFFTRALGKEARPIADSADAVVSPVDGCISQLGSLTDDRLLQAKGWSYNLVELLGGSKSRAAPFRGGQFATLYLSPKDYHRIHMPLAGHLREMTYLPGRLFSVSPKTVNGIHNLFARNERVVNVFDTEAGPLAMVLVGAIFVGSIETVWAGQITPPYRHQPHHQLYEGEKAISLAKGQEMGRFNMGSTVILIFPPDTIHWQSELQAEMPVRMGQPLGQLITAVQTEVEKQWANA.

Residues Asp-98, His-155, and Ser-259 each act as charge relay system; for autoendoproteolytic cleavage activity in the active site. Ser-259 (schiff-base intermediate with substrate; via pyruvic acid; for decarboxylase activity) is an active-site residue. Pyruvic acid (Ser); by autocatalysis is present on Ser-259.

The protein belongs to the phosphatidylserine decarboxylase family. PSD-B subfamily. Prokaryotic type I sub-subfamily. Heterodimer of a large membrane-associated beta subunit and a small pyruvoyl-containing alpha subunit. Pyruvate is required as a cofactor. Post-translationally, is synthesized initially as an inactive proenzyme. Formation of the active enzyme involves a self-maturation process in which the active site pyruvoyl group is generated from an internal serine residue via an autocatalytic post-translational modification. Two non-identical subunits are generated from the proenzyme in this reaction, and the pyruvate is formed at the N-terminus of the alpha chain, which is derived from the carboxyl end of the proenzyme. The autoendoproteolytic cleavage occurs by a canonical serine protease mechanism, in which the side chain hydroxyl group of the serine supplies its oxygen atom to form the C-terminus of the beta chain, while the remainder of the serine residue undergoes an oxidative deamination to produce ammonia and the pyruvoyl prosthetic group on the alpha chain. During this reaction, the Ser that is part of the protease active site of the proenzyme becomes the pyruvoyl prosthetic group, which constitutes an essential element of the active site of the mature decarboxylase.

Its subcellular location is the cell membrane. The catalysed reaction is a 1,2-diacyl-sn-glycero-3-phospho-L-serine + H(+) = a 1,2-diacyl-sn-glycero-3-phosphoethanolamine + CO2. It participates in phospholipid metabolism; phosphatidylethanolamine biosynthesis; phosphatidylethanolamine from CDP-diacylglycerol: step 2/2. In terms of biological role, catalyzes the formation of phosphatidylethanolamine (PtdEtn) from phosphatidylserine (PtdSer). The polypeptide is Phosphatidylserine decarboxylase proenzyme (Nitrosococcus oceani (strain ATCC 19707 / BCRC 17464 / JCM 30415 / NCIMB 11848 / C-107)).